Here is a 267-residue protein sequence, read N- to C-terminus: 2-keto-3-deoxy-L-rhamnonate aldolase (267 aa).

H49 (proton acceptor) is an active-site residue. Q151 lines the substrate pocket. E153 contacts Mg(2+). A178 and D179 together coordinate substrate. D179 contacts Mg(2+).

Belongs to the HpcH/HpaI aldolase family. KDR aldolase subfamily. Homohexamer. It depends on Mg(2+) as a cofactor.

It carries out the reaction 2-dehydro-3-deoxy-L-rhamnonate = (S)-lactaldehyde + pyruvate. In terms of biological role, catalyzes the reversible retro-aldol cleavage of 2-keto-3-deoxy-L-rhamnonate (KDR) to pyruvate and lactaldehyde. This is 2-keto-3-deoxy-L-rhamnonate aldolase from Shigella sonnei (strain Ss046).